We begin with the raw amino-acid sequence, 155 residues long: Nodulin-related protein 2 (155 aa).

N-acetylmethionine is present on Met-1. 2 disordered regions span residues 1–37 (MNFI…PATN) and 85–155 (DEKS…GFLK). A compositionally biased stretch (basic and acidic residues) spans 95 to 106 (DKAEKYLNDYES). Positions 120–130 (SQAEPASQPEP) are enriched in low complexity.

As to quaternary structure, interacts with DEK3.

May be a negative regulator of the ABA signaling/synthesis pathway. The sequence is that of Nodulin-related protein 2 from Arabidopsis thaliana (Mouse-ear cress).